A 314-amino-acid chain; its full sequence is Ribosomal RNA small subunit methyltransferase H (314 aa).

Residues 37-39 (GGH), Asp57, Phe83, Asp105, and Gln112 each bind S-adenosyl-L-methionine.

It belongs to the methyltransferase superfamily. RsmH family.

The protein localises to the cytoplasm. The catalysed reaction is cytidine(1402) in 16S rRNA + S-adenosyl-L-methionine = N(4)-methylcytidine(1402) in 16S rRNA + S-adenosyl-L-homocysteine + H(+). Specifically methylates the N4 position of cytidine in position 1402 (C1402) of 16S rRNA. The chain is Ribosomal RNA small subunit methyltransferase H from Thioalkalivibrio sulfidiphilus (strain HL-EbGR7).